Consider the following 232-residue polypeptide: Ubiquinone biosynthesis O-methyltransferase (232 aa).

Arg36, Gly55, Asp76, and Leu120 together coordinate S-adenosyl-L-methionine.

The protein belongs to the methyltransferase superfamily. UbiG/COQ3 family.

The enzyme catalyses a 3-demethylubiquinol + S-adenosyl-L-methionine = a ubiquinol + S-adenosyl-L-homocysteine + H(+). The catalysed reaction is a 3-(all-trans-polyprenyl)benzene-1,2-diol + S-adenosyl-L-methionine = a 2-methoxy-6-(all-trans-polyprenyl)phenol + S-adenosyl-L-homocysteine + H(+). It participates in cofactor biosynthesis; ubiquinone biosynthesis. Functionally, O-methyltransferase that catalyzes the 2 O-methylation steps in the ubiquinone biosynthetic pathway. The protein is Ubiquinone biosynthesis O-methyltransferase of Pseudomonas putida (strain ATCC 700007 / DSM 6899 / JCM 31910 / BCRC 17059 / LMG 24140 / F1).